Here is a 261-residue protein sequence, read N- to C-terminus: Small ribosomal subunit protein uS2 (261 aa).

A disordered region spans residues 224-261 (GRQGEDDEAVQQEEVAEGVSKDSLEDLKKTVEEGSNEE). Over residues 228–239 (EDDEAVQQEEVA) the composition is skewed to acidic residues. Residues 242–255 (VSKDSLEDLKKTVE) are compositionally biased toward basic and acidic residues.

Belongs to the universal ribosomal protein uS2 family.

The polypeptide is Small ribosomal subunit protein uS2 (rpsB) (Pediococcus acidilactici).